The chain runs to 365 residues: MSKAPEDQRPMPRRPAAFSLEEPSSSPARPPFAEAQEPQRRAPKSFDANVTITPDAEDPFLAGLSEDEAILPIARPAKRRFSFGKLAGAAFGALASFAIGLWIDDLIRDLFTRADWLGYTALTLLGIGLLALTVVVIRELAGIYRLNAVQAIKQRASALSLQGTASEARKLVKDVEDLTQHRAETARGRSVLKAAENDIIDAPHLIALAERELLAPLDAKARSLIINASKRVSVVTAVSPRALVDLAYVLFEVVRLVRAMAELYGGRPGSIGMLRLLRDVFAHLAVTGSIAIGDGLAQQVLGHGLASRLSARLGEGVINGLMTARIGIAAMDLCRPLEFKALRRPGIGDFMPALKPAINPDSKAL.

Residues 1–10 are compositionally biased toward basic and acidic residues; that stretch reads MSKAPEDQRP. The segment at 1–47 is disordered; it reads MSKAPEDQRPMPRRPAAFSLEEPSSSPARPPFAEAQEPQRRAPKSFD. 2 helical membrane passes run 83–103 and 117–137; these read FGKL…GLWI and LGYT…VVVI.

This sequence belongs to the UPF0283 family.

It is found in the cell inner membrane. In Allorhizobium ampelinum (strain ATCC BAA-846 / DSM 112012 / S4) (Agrobacterium vitis (strain S4)), this protein is UPF0283 membrane protein Avi_2471.